The chain runs to 918 residues: Eukaryotic translation initiation factor 3 subunit C (918 aa).

The interval 1 to 174 (MSRFFKGGSS…EEEGRRVVKS (174 aa)) is disordered. Phosphoserine occurs at positions 10, 12, 16, 19, and 20. 3 stretches are compositionally biased toward acidic residues: residues 36-47 (SSSEEESSEEES), 54-67 (ESSE…ESEV), and 79-128 (EDSE…ESDE). At threonine 667 the chain carries Phosphothreonine. Residues 681 to 856 (FHMHINLELL…GAIIFERVEI (176 aa)) form the PCI domain. The tract at residues 879–918 (KLYEQKTQHTNPQENRRRDKGGSVKRRNERTENRNRSDMN) is disordered. A compositionally biased stretch (basic and acidic residues) spans 907-918 (ERTENRNRSDMN).

Belongs to the eIF-3 subunit C family. Component of the eukaryotic translation initiation factor 3 (eIF-3) complex. The eIF-3 complex appears to include tif32/eif3a, SPAC25G10.08/eif3b, tif33/eif3c, SPBC4C3.07/eif3f, tif35/eif3g and sum1/eif3i. This set of common subunits may also associate exclusively with either moe1/eif3d and int6/eif3e, or with SPAC821.05/eif3h and SPAC1751.03/eif3m. The eIF-3 complex may also include SPAC3A12.13c/eif3j.

The protein resides in the cytoplasm. Component of the eukaryotic translation initiation factor 3 (eIF-3) complex, which is involved in protein synthesis of a specialized repertoire of mRNAs and, together with other initiation factors, stimulates binding of mRNA and methionyl-tRNAi to the 40S ribosome. The eIF-3 complex specifically targets and initiates translation of a subset of mRNAs involved in cell proliferation. The chain is Eukaryotic translation initiation factor 3 subunit C (nip1) from Schizosaccharomyces pombe (strain 972 / ATCC 24843) (Fission yeast).